We begin with the raw amino-acid sequence, 254 residues long: Pyridoxine 5'-phosphate synthase (254 aa).

A 3-amino-2-oxopropyl phosphate-binding site is contributed by Asn-12. A 1-deoxy-D-xylulose 5-phosphate-binding site is contributed by 14 to 15 (DH). Arg-23 is a binding site for 3-amino-2-oxopropyl phosphate. His-48 serves as the catalytic Proton acceptor. Positions 50 and 55 each coordinate 1-deoxy-D-xylulose 5-phosphate. The Proton acceptor role is filled by Glu-75. Residue Thr-105 coordinates 1-deoxy-D-xylulose 5-phosphate. Catalysis depends on His-199, which acts as the Proton donor. 3-amino-2-oxopropyl phosphate is bound by residues Gly-200 and 221 to 222 (GF).

It belongs to the PNP synthase family. As to quaternary structure, homooctamer; tetramer of dimers.

Its subcellular location is the cytoplasm. It catalyses the reaction 3-amino-2-oxopropyl phosphate + 1-deoxy-D-xylulose 5-phosphate = pyridoxine 5'-phosphate + phosphate + 2 H2O + H(+). The protein operates within cofactor biosynthesis; pyridoxine 5'-phosphate biosynthesis; pyridoxine 5'-phosphate from D-erythrose 4-phosphate: step 5/5. Its function is as follows. Catalyzes the complicated ring closure reaction between the two acyclic compounds 1-deoxy-D-xylulose-5-phosphate (DXP) and 3-amino-2-oxopropyl phosphate (1-amino-acetone-3-phosphate or AAP) to form pyridoxine 5'-phosphate (PNP) and inorganic phosphate. The polypeptide is Pyridoxine 5'-phosphate synthase (Rhodopseudomonas palustris (strain HaA2)).